The primary structure comprises 45 residues: Myotoxin-3 (45 aa).

3 disulfides stabilise this stretch: Cys-4–Cys-36, Cys-11–Cys-30, and Cys-18–Cys-37.

In terms of assembly, monomer. As to expression, expressed by the venom gland.

It is found in the secreted. In terms of biological role, cationic peptide that possesses multiple functions. It acts as a cell-penetrating peptide (CPP), and as a potent voltage-gated potassium channel (Kv) inhibitor. It exhibits antimicrobial activities, hind limb paralysis, and severe muscle necrosis by a non-enzymatic mechanism. The chain is Myotoxin-3 from Crotalus viridis viridis (Prairie rattlesnake).